The chain runs to 307 residues: UDP-3-O-acyl-N-acetylglucosamine deacetylase (307 aa).

Zn(2+)-binding residues include histidine 78, histidine 241, and aspartate 245. Histidine 268 acts as the Proton donor in catalysis.

Belongs to the LpxC family. The cofactor is Zn(2+).

The catalysed reaction is a UDP-3-O-[(3R)-3-hydroxyacyl]-N-acetyl-alpha-D-glucosamine + H2O = a UDP-3-O-[(3R)-3-hydroxyacyl]-alpha-D-glucosamine + acetate. The protein operates within glycolipid biosynthesis; lipid IV(A) biosynthesis; lipid IV(A) from (3R)-3-hydroxytetradecanoyl-[acyl-carrier-protein] and UDP-N-acetyl-alpha-D-glucosamine: step 2/6. Its function is as follows. Catalyzes the hydrolysis of UDP-3-O-myristoyl-N-acetylglucosamine to form UDP-3-O-myristoylglucosamine and acetate, the committed step in lipid A biosynthesis. In Polaromonas naphthalenivorans (strain CJ2), this protein is UDP-3-O-acyl-N-acetylglucosamine deacetylase.